The primary structure comprises 265 residues: Undecaprenyl-diphosphatase (265 aa).

Transmembrane regions (helical) follow at residues 1 to 21 (MDWLHVVALAVIQGLTEFLPI), 40 to 60 (GLAFDVAVHVGSLAAVVLAFH), 87 to 107 (WAVIVGTLPAVVIGFLLENVI), 113 to 133 (ASLVIAITTLLFGLLLWWADV), 151 to 173 (IIGFAQALALIPGTSRSGITITA), 188 to 208 (SFLLSIPLILAAGSLKGVELI), 214 to 234 (VAWGTLVAGTLMSFVAAWLCI), and 244 to 264 (IGMLPFVIYRLILGIVLLVWV).

Belongs to the UppP family.

Its subcellular location is the cell inner membrane. It carries out the reaction di-trans,octa-cis-undecaprenyl diphosphate + H2O = di-trans,octa-cis-undecaprenyl phosphate + phosphate + H(+). Functionally, catalyzes the dephosphorylation of undecaprenyl diphosphate (UPP). Confers resistance to bacitracin. The chain is Undecaprenyl-diphosphatase from Chromohalobacter salexigens (strain ATCC BAA-138 / DSM 3043 / CIP 106854 / NCIMB 13768 / 1H11).